A 153-amino-acid polypeptide reads, in one-letter code: Transcriptional repressor NrdR (153 aa).

Residues 3–34 fold into a zinc finger; that stretch reads CPFCNNISTNVKDSRSIEDDMLIRRRRVCPVC. One can recognise an ATP-cone domain in the interval 49–139; the sequence is LMVIKKNGGL…VYMNFKNIND (91 aa).

The protein belongs to the NrdR family. Zn(2+) serves as cofactor.

Its function is as follows. Negatively regulates transcription of bacterial ribonucleotide reductase nrd genes and operons by binding to NrdR-boxes. This is Transcriptional repressor NrdR from Ehrlichia ruminantium (strain Gardel).